Here is a 219-residue protein sequence, read N- to C-terminus: Ribosomal RNA small subunit methyltransferase G (219 aa).

S-adenosyl-L-methionine-binding positions include G85, L90, 136–137, and R151; that span reads VE.

The protein belongs to the methyltransferase superfamily. RNA methyltransferase RsmG family.

Its subcellular location is the cytoplasm. The catalysed reaction is guanosine(527) in 16S rRNA + S-adenosyl-L-methionine = N(7)-methylguanosine(527) in 16S rRNA + S-adenosyl-L-homocysteine. In terms of biological role, specifically methylates the N7 position of guanine in position 527 of 16S rRNA. This chain is Ribosomal RNA small subunit methyltransferase G, found in Cellvibrio japonicus (strain Ueda107) (Pseudomonas fluorescens subsp. cellulosa).